Reading from the N-terminus, the 53-residue chain is uncharacterized protein (53 aa).

The span at 1–10 shows a compositional bias: polar residues; sequence MHILTRSSKN. The interval 1–25 is disordered; sequence MHILTRSSKNAFPRSRSRQDIHISS.

This is an uncharacterized protein from Saccharomyces cerevisiae (strain ATCC 204508 / S288c) (Baker's yeast).